A 146-amino-acid chain; its full sequence is Ankyrin repeat-containing protein P16F5.05c (146 aa).

ANK repeat units follow at residues 1–31, 35–64, 70–99, and 103–132; these read MDVDDLIYACRAADEELLDEIIEKCPQELSR, NGNSGLHMASANGHIAVVQKIIPYLNKEVI, SGNTAMHWAALNGHAEICKLLLEAGGDPHI, and YEKSPIYEADIRNQQKVMDLFLDFEIAKGS.

The protein resides in the cytoplasm. It localises to the nucleus. The protein is Ankyrin repeat-containing protein P16F5.05c of Schizosaccharomyces pombe (strain 972 / ATCC 24843) (Fission yeast).